We begin with the raw amino-acid sequence, 124 residues long: Small ribosomal subunit protein uS12 (124 aa).

D89 is modified (3-methylthioaspartic acid).

Belongs to the universal ribosomal protein uS12 family. Part of the 30S ribosomal subunit. Contacts proteins S8 and S17. May interact with IF1 in the 30S initiation complex.

In terms of biological role, with S4 and S5 plays an important role in translational accuracy. Its function is as follows. Interacts with and stabilizes bases of the 16S rRNA that are involved in tRNA selection in the A site and with the mRNA backbone. Located at the interface of the 30S and 50S subunits, it traverses the body of the 30S subunit contacting proteins on the other side and probably holding the rRNA structure together. The combined cluster of proteins S8, S12 and S17 appears to hold together the shoulder and platform of the 30S subunit. This is Small ribosomal subunit protein uS12 from Hydrogenovibrio crunogenus (strain DSM 25203 / XCL-2) (Thiomicrospira crunogena).